The primary structure comprises 264 residues: Teichoic acids export ATP-binding protein TagH (264 aa).

One can recognise an ABC transporter domain in the interval 5–243; it reads VNIKNVTKEY…YEAFLNDFKK (239 aa). 57–64 is an ATP binding site; that stretch reads GINGSGKS.

The protein belongs to the ABC transporter superfamily. Teichoic acids exporter (TC 3.A.1.104.1) family. As to quaternary structure, the complex is composed of two ATP-binding proteins (TagH) and two transmembrane proteins (TagG).

It is found in the cell membrane. The enzyme catalyses ATP + H2O + teichoic acidSide 1 = ADP + phosphate + teichoic acidSide 2.. Part of the ABC transporter complex TagGH involved in teichoic acids export. Responsible for energy coupling to the transport system. The sequence is that of Teichoic acids export ATP-binding protein TagH from Staphylococcus aureus (strain USA300).